The primary structure comprises 100 residues: Integration host factor subunit alpha (100 aa).

The protein belongs to the bacterial histone-like protein family. As to quaternary structure, heterodimer of an alpha and a beta chain.

Functionally, this protein is one of the two subunits of integration host factor, a specific DNA-binding protein that functions in genetic recombination as well as in transcriptional and translational control. The protein is Integration host factor subunit alpha of Ruegeria pomeroyi (strain ATCC 700808 / DSM 15171 / DSS-3) (Silicibacter pomeroyi).